Here is a 270-residue protein sequence, read N- to C-terminus: Undecaprenyl-diphosphatase (270 aa).

8 consecutive transmembrane segments (helical) span residues 14–34 (GLTEVLPISSSAHLILIPTFL), 40–60 (GITFDVALHLGTFIALCLYFW), 88–108 (FYIIAGTFPAAIVGKLFETTI), 117–137 (SLIALFLIVFALLLAFADTSG), 146–166 (ITLKSAIIIGLAQCLALIPGV), 189–209 (FSFLLSLPIVAGAALFELSGL), 221–241 (PLLIGIATSAVFGYISVAFLL), and 249–269 (LYPFVWYRIAIGCLALVFINF).

The protein belongs to the UppP family.

Its subcellular location is the cell inner membrane. It carries out the reaction di-trans,octa-cis-undecaprenyl diphosphate + H2O = di-trans,octa-cis-undecaprenyl phosphate + phosphate + H(+). Its function is as follows. Catalyzes the dephosphorylation of undecaprenyl diphosphate (UPP). Confers resistance to bacitracin. The polypeptide is Undecaprenyl-diphosphatase (Geotalea daltonii (strain DSM 22248 / JCM 15807 / FRC-32) (Geobacter daltonii)).